Consider the following 237-residue polypeptide: Small ribosomal subunit protein uS3 (237 aa).

In terms of domain architecture, KH type-2 spans 17–86 (VERHLGHELK…SPQIEVQQVD (70 aa)).

Belongs to the universal ribosomal protein uS3 family. As to quaternary structure, part of the 30S ribosomal subunit.

Binds the lower part of the 30S subunit head. The protein is Small ribosomal subunit protein uS3 of Methanospirillum hungatei JF-1 (strain ATCC 27890 / DSM 864 / NBRC 100397 / JF-1).